The following is a 321-amino-acid chain: Protein APA1 (321 aa).

Positions 50 to 70 (SLIEKPERGQTPEGEDPLGKP) are disordered. Residue lysine 54 coordinates substrate. Threonine 60 is modified (phosphothreonine). Substrate is bound by residues 93–94 (NK), asparagine 145, and 151–154 (GSSL). The active-site Nucleophile is the histidine 158. Residues glutamine 160, 273-275 (NST), methionine 280, and lysine 284 each bind substrate.

It belongs to the ATP adenylyltransferase family. Monomer. The cofactor is a divalent metal cation. The N-terminus is blocked.

It localises to the cytoplasm. The protein resides in the nucleus. The enzyme catalyses ADP + ATP + H(+) = P(1),P(4)-bis(5'-adenosyl) tetraphosphate + phosphate. The catalysed reaction is sulfate + ADP + H(+) = adenosine 5'-phosphosulfate + phosphate. Its function is as follows. Ap4A phosphorylase catalyzes the phosphorolytic degradation of bis(5'-adenosyl) tetraphosphate (Ap4A) into ADP and ATP. Can also use other Np4N' nucleotides (where N and N' stand for A,C,G or U) as substrates with equal efficiency. Cannot catalyze the reverse reaction. Additionally, this enzyme can also catalyze the phosphorolytic degradation of adenosine 5'-phosphosulfate (AMPS) into ADP and sulfate, the reversible exchange reaction between inorganic phosphate and the beta-phosphate of a nucleoside diphosphate (NDP), and the synthesis of Ap4A from AMPS plus ATP. The polypeptide is Protein APA1 (Saccharomyces cerevisiae (strain ATCC 204508 / S288c) (Baker's yeast)).